Consider the following 139-residue polypeptide: MAKKKRNPSAEEAGDGEQTAAELGDFETTLGDVETIVRKLESGALTLDDSLKQYEVAVAKMRQCYQLLDVAERKISVLAGVDAEGRPVTEPLENMSGGESLVQKQASRGKRRGAVAPDHSASDTTGVDSADLDSAEDDE.

Disordered stretches follow at residues 1–26 (MAKK…LGDF) and 82–139 (DAEG…EDDE). The span at 130 to 139 (ADLDSAEDDE) shows a compositional bias: acidic residues.

It belongs to the XseB family. Heterooligomer composed of large and small subunits.

The protein localises to the cytoplasm. The enzyme catalyses Exonucleolytic cleavage in either 5'- to 3'- or 3'- to 5'-direction to yield nucleoside 5'-phosphates.. Its function is as follows. Bidirectionally degrades single-stranded DNA into large acid-insoluble oligonucleotides, which are then degraded further into small acid-soluble oligonucleotides. The sequence is that of Exodeoxyribonuclease 7 small subunit from Rhodopirellula baltica (strain DSM 10527 / NCIMB 13988 / SH1).